The sequence spans 837 residues: Tuftelin-interacting protein 11 (837 aa).

Composition is skewed to basic and acidic residues over residues 1–13 (MSLS…GEGR) and 53–64 (VWAERDSDDERP). Disordered stretches follow at residues 1–21 (MSLS…DDER), 53–72 (VWAE…KRAR), and 85–133 (LKKG…KGFA). Residues 1 to 50 (MSLSHLYRDGEGRIDDDDDERENFEITDWDLQNEFNPNRQRHWQTKEEAT) are required for interaction with DHX15. Ser-2, Ser-59, and Ser-98 each carry phosphoserine. Residues 91-102 (EEAELEDSDDEE) show a composition bias toward acidic residues. Residues 103-116 (KPVKQDDFPKDFGP) show a composition bias toward basic and acidic residues. Position 144 is a phosphoserine (Ser-144). The region spanning 149-195 (TKGIGQKLLQKMGYVPGRGLGKNAQGIINPIEAKQRKGKGAVGAYGS) is the G-patch domain. The interval 179 to 236 (IEAKQRKGKGAVGAYGSERTTQSMQDFPVVDSEEEAEEEFQKELSQWRKDPSGSKKKP) is disordered. Phosphoserine is present on Ser-210. Basic and acidic residues predominate over residues 217–231 (EFQKELSQWRKDPSG). The Nuclear localization signal signature appears at 700–705 (VKDKFN). The required for nuclear speckle localization stretch occupies residues 710–734 (IMNRAVSSNVGAYMQPGARENIAYL).

This sequence belongs to the TFP11/STIP family. In terms of assembly, identified in the spliceosome C complex. Found in the Intron Large (IL) complex, a post-mRNA release spliceosomal complex containing the excised intron, U2, U5 and U6 snRNPs, and splicing factors. Interacts with TUFT1. Interacts with DHX15; indicative for a recruitment of DHX15 to the IL complex. Interacts with GCFC2.

The protein localises to the cytoplasm. It is found in the nucleus. Its function is as follows. Involved in pre-mRNA splicing, specifically in spliceosome disassembly during late-stage splicing events. Intron turnover seems to proceed through reactions in two lariat-intron associated complexes termed Intron Large (IL) and Intron Small (IS). In cooperation with DHX15 seems to mediate the transition of the U2, U5 and U6 snRNP-containing IL complex to the snRNP-free IS complex leading to efficient debranching and turnover of excised introns. May play a role in the differentiation of ameloblasts and odontoblasts or in the forming of the enamel extracellular matrix. The protein is Tuftelin-interacting protein 11 (TFIP11) of Pongo abelii (Sumatran orangutan).